Here is a 65-residue protein sequence, read N- to C-terminus: Large ribosomal subunit protein uL29 (65 aa).

Belongs to the universal ribosomal protein uL29 family.

This is Large ribosomal subunit protein uL29 (rpmC) from Xylella fastidiosa (strain 9a5c).